The primary structure comprises 1317 residues: DNA-directed RNA polymerase subunit beta' (1317 aa).

Positions 60, 62, 75, and 78 each coordinate Zn(2+). The segment at 183–209 is disordered; it reads ELEDEGAKSDVKRKVRDGGEREMRQLR. Positions 535, 537, and 539 each coordinate Mg(2+). Zn(2+) is bound by residues C890, C967, C974, and C977.

It belongs to the RNA polymerase beta' chain family. In terms of assembly, the RNAP catalytic core consists of 2 alpha, 1 beta, 1 beta' and 1 omega subunit. When a sigma factor is associated with the core the holoenzyme is formed, which can initiate transcription. Mg(2+) is required as a cofactor. Zn(2+) serves as cofactor.

The enzyme catalyses RNA(n) + a ribonucleoside 5'-triphosphate = RNA(n+1) + diphosphate. Its function is as follows. DNA-dependent RNA polymerase catalyzes the transcription of DNA into RNA using the four ribonucleoside triphosphates as substrates. The polypeptide is DNA-directed RNA polymerase subunit beta' (Mycolicibacterium vanbaalenii (strain DSM 7251 / JCM 13017 / BCRC 16820 / KCTC 9966 / NRRL B-24157 / PYR-1) (Mycobacterium vanbaalenii)).